We begin with the raw amino-acid sequence, 984 residues long: Putative formate dehydrogenase SAB2186c (984 aa).

Residues Glu3–Asp79 form the 2Fe-2S ferredoxin-type domain. Residues Cys37, Cys48, Cys51, and Cys63 each contribute to the [2Fe-2S] cluster site. Residues Asp79 to Gly119 form the 4Fe-4S His(Cys)3-ligated-type domain. Positions 95, 99, 102, 109, 147, 150, 153, 157, 190, 193, 196, 200, 264, 267, 271, and 299 each coordinate [4Fe-4S] cluster. 4Fe-4S ferredoxin-type domains follow at residues Pro138 to Thr165 and Asn181 to Glu211. The segment at Met252–Lys984 is formate dehydrogenase. The 57-residue stretch at Ile257–Gln313 folds into the 4Fe-4S Mo/W bis-MGD-type domain.

The protein in the C-terminal section; belongs to the prokaryotic molybdopterin-containing oxidoreductase family. It depends on [2Fe-2S] cluster as a cofactor. [4Fe-4S] cluster serves as cofactor. Requires Mo-bis(molybdopterin guanine dinucleotide) as cofactor.

It carries out the reaction formate + NAD(+) = CO2 + NADH. The sequence is that of Putative formate dehydrogenase SAB2186c from Staphylococcus aureus (strain bovine RF122 / ET3-1).